The sequence spans 1069 residues: Receptor-type guanylate cyclase gcy-29 (1069 aa).

The signal sequence occupies residues 1–23 (MLPNFWNFQFIFVIFCWIPIVVS). The Extracellular segment spans residues 24 to 458 (DEKIVLKIGS…FREENCDYTQ (435 aa)). N-linked (GlcNAc...) asparagine glycosylation is found at Asn161, Asn240, and Asn407. A helical membrane pass occupies residues 459 to 479 (TIVIATAVVCIILTVFLGIWL). Residues 480–1069 (RRACETSALD…FKKKNNTFDF (590 aa)) lie on the Cytoplasmic side of the membrane. Residues 497 to 806 (RDDVQILDEE…RVRLATEIAL (310 aa)) enclose the Protein kinase domain. Residues 503–511 (LDEEQVKSV) and Lys527 each bind ATP. The region spanning 876 to 1006 (TVMFSDIVGF…ETVNIAAVME (131 aa)) is the Guanylate cyclase domain. Mg(2+)-binding residues include Asp881, Ile882, and Asp925.

This sequence belongs to the adenylyl cyclase class-4/guanylyl cyclase family. As to expression, expressed bilaterally in ASE and AFD sensory neurons.

The protein localises to the cell membrane. It carries out the reaction GTP = 3',5'-cyclic GMP + diphosphate. In terms of biological role, guanylate cyclase involved in the production of the second messenger cGMP. In Caenorhabditis elegans, this protein is Receptor-type guanylate cyclase gcy-29.